The primary structure comprises 83 residues: Small ribosomal subunit protein uS15c (83 aa).

It belongs to the universal ribosomal protein uS15 family. As to quaternary structure, part of the 30S ribosomal subunit.

It localises to the plastid. The protein localises to the chloroplast. The protein is Small ribosomal subunit protein uS15c (rps15) of Fagopyrum esculentum subsp. ancestrale (Wild buckwheat).